A 208-amino-acid polypeptide reads, in one-letter code: Orotidine 5'-phosphate decarboxylase (208 aa).

Substrate contacts are provided by residues D7, K29, 57–66, S109, 162–172, G185, and R186; these read DLKLADIPNT and PGIGAQGGKAK. K59 (proton donor) is an active-site residue.

The protein belongs to the OMP decarboxylase family. Type 1 subfamily. In terms of assembly, homodimer.

It catalyses the reaction orotidine 5'-phosphate + H(+) = UMP + CO2. Its pathway is pyrimidine metabolism; UMP biosynthesis via de novo pathway; UMP from orotate: step 2/2. Its function is as follows. Catalyzes the decarboxylation of orotidine 5'-monophosphate (OMP) to uridine 5'-monophosphate (UMP). This is Orotidine 5'-phosphate decarboxylase (pyrF) from Pyrococcus horikoshii (strain ATCC 700860 / DSM 12428 / JCM 9974 / NBRC 100139 / OT-3).